The sequence spans 77 residues: Exodeoxyribonuclease 7 small subunit (77 aa).

Belongs to the XseB family. Heterooligomer composed of large and small subunits.

The protein resides in the cytoplasm. It catalyses the reaction Exonucleolytic cleavage in either 5'- to 3'- or 3'- to 5'-direction to yield nucleoside 5'-phosphates.. In terms of biological role, bidirectionally degrades single-stranded DNA into large acid-insoluble oligonucleotides, which are then degraded further into small acid-soluble oligonucleotides. This is Exodeoxyribonuclease 7 small subunit from Carboxydothermus hydrogenoformans (strain ATCC BAA-161 / DSM 6008 / Z-2901).